A 2131-amino-acid polypeptide reads, in one-letter code: MGSIESDSVLSFFSQQCFQHPDNTAIDDGPNGNLSYSQLDQQSSTLAHCLRQNGIKAGQVVPLLTTSRLEMVIAVLGILKAGGVYVPVDIDQWPADRINYVLGRTCSGLVVYTGDHIPSGINLEEKCRVVQVQIRLENELKAQYEPNPRPRLMCIIFTSGTTDKPKGVMVPHTSVARFVTSPGFNYDIVPGDRVLLVLSVAFDACMGTLFNTICNGGTVILANRLNFQERSRQCTVLVMTPSILDVLSPPQSPSDYPQLERIFLGGETPSQQLLEAWSAFNDVALWIAYGPTEATCAVLCGRLQASSETGQFHPTRLGHSIPGSSVLLLTERMETIQDSNMEGEICIEGPCLTDGYWQDEERTKDRFIEYHGRRVYRTGDLGRFVTTEDNETAIEFCGRRDRVTKIRGFLVNLELDVDAGLRRLDPNITAVFSILLDRKLCTAVVPSSVDCRNLQAAWRLVAPPYLVPDKMVALDGLPLTANGKFDPRQVISILRDALQKDATMQNGTSHNNGAANDRKQYNWRSGPLTIDQTIIKGLQQVLGISQSEINMKDSAVFQGVHSLAAARLSTFCRHHGYNVSVESILTEPSLHALVEKNRHETENRPDSSAFATRTPEESSMPTQGPVTPLQKRMVLDSIVEDPRANCLQHISWYKTEDIGRLREAWKTVVTHEPIFQTTFELDETQEPSQRLIGAGLFIWEETTVTTHAAIKESLKSLPAATGLGSRFRVLHCVGSEFPHNESMFVWAVHHALIDGYSASLVFEKVDKALQNEPFESSHPFMLAAQDIAQMRDKLAPEVDHFWKDQEAQYPGAAGEPLIPEALTNQSGVDFAEHVVNVSIDNQRLRFAAQQAQATPAAIFYAAWALLLSSYTNSDTVIFGAVFSGRNLPFSWAPCMVGPLLNILPLRCRIKRDIESASFVREIHQTIQNISRFQVADRPKDTPPFASTLTVQDSGLRSGTTAIPSLHSPEVRESNLLPLTVVVETDSQITFLYRTDRFSESHVKDMAAIYMSLLDAFLDPGRSLQHCMDRRFPIEMNQAILQTGNIDSEVARVPSVDGGHTLSSLFGTVASLHPTHIAVQKGSHSITYATLVQYAARVAAVIEKKTQPGEVVAILADRSINWIVGIMGATAANTVYCPLDSSYPAEYREDLLRRSHAKLFLVPSKSQLPTADSGVATVSIEDILASDIKPLYPWRKQTPSDGAYICFTSGSTGVPKGVLCLHQGVVSLQSSSEEGRLHSEPGRRIAQFMSTGFDVCVHEVFASLCYGATLVLRKDDDDPFSHLADVDVVSMNATVAGSLDPSEYPDLHYVYLAGEPIPQRTADKWAVGRKLYNAYGPTEATIIVTRTLLQAGILVAIGKPFPSVRAYILNDRRELQPPNTLGNLFVAGVQVSHGYLDLPEATANSYFPDPFLPGSSNERMYDTGDIGFWDTDGKIQCCGRKDRQVKVRGFRINLDGISNMATLRMPTIRHAAAFVKDGAVVLCVEPEDVNTDELRARLKDALPPHAIPRTIYSIAHIPLSLNGKIDVKHLAAMEVRNDTALTNGITKANKLDSAQQTSSNGLSNGASHASSEAHLEKLIIKEWQQLLGLDPSQPLSRSDDFVLLGGDSIRQLNLAARLRSVLGLPIKVKDIIRSSTLGDLITLVAQQQEQHGKKNVPNGTPAHNSVHRPLGYKKLSPPEMEWACKYRHSQSQSTFNVPYVARLSSAVDWQRLASALETVLNRHRVLRSRFTTKDGTGERVLSEHPISVNRTVDDIDIQEVINRPFEFDSSEALIRTVISPSTLVLCISHILCDLTAINTLLYEVAATYRGLALPPVVREYFDVTWHHTVDPEKQRFWAEYLQGLSFKQPDEVKQVNGVNGCDHSNGTKIRKPRSYRGTSRTTSLSDSLYRHLIISSTKNGFTFHQFGMAVAGLVLHFLTGRDDIVLGSPFVNRPSFEDRQVIGLFLEPLPVRISVKHQNENDGGPGAREFVQSVRQSSQSALAHSVPWAELMSHLGLPFPSAQPQVFSCCVTFHDDRGTDPPLAINGVEGQYISAEGAKFPLLFEWQATRATGQHEQLTVRLEYDTDWFSAEFTEILEALLLECFRMLLEEEGSRHGEVKGRLGEVLQSEATRIGVAVDEIYETARQYLTVV.

The interval 13–407 (FSQQCFQHPD…GRRDRVTKIR (395 aa)) is adenylation 1. Positions 525 to 601 (SGPLTIDQTI…ALVEKNRHET (77 aa)) constitute a Carrier 1 domain. Ser-562 is subject to O-(pantetheine 4'-phosphoryl)serine. Residues 598 to 627 (RHETENRPDSSAFATRTPEESSMPTQGPVT) are disordered. Residues 625 to 1018 (PVTPLQKRMV…YMSLLDAFLD (394 aa)) are condensation 1. The tract at residues 1069 to 1447 (ASLHPTHIAV…GRKDRQVKVR (379 aa)) is adenylation 2. Positions 1569–1647 (SSEAHLEKLI…DLITLVAQQQ (79 aa)) constitute a Carrier 2 domain. Ser-1607 carries the O-(pantetheine 4'-phosphoryl)serine modification. The tract at residues 1688–2086 (SQSQSTFNVP…EALLLECFRM (399 aa)) is condensation 2.

Belongs to the NRP synthetase family. The cofactor is pantetheine 4'-phosphate.

It catalyses the reaction L-tryptophan + L-alanine + 2 ATP = cyclo(L-tryptophyl-L-alanyl) + 2 ADP + 2 phosphate + 2 H(+). It functions in the pathway secondary metabolite biosynthesis. It participates in alkaloid biosynthesis. Functionally, nonribosomal peptide synthetase; part of the gene cluster that mediates the biosynthesis of echinulin family alkaloid. The pathway begins with the biosynthesis of the cyclic dipeptide cyclo-L-Trp-L-Ala (cyclo-TA) by the NRPS criC via condensation of L-alanine and L-tryptophan. The prenyltransferase criA then catalyzes the first prenylation step, a reverse prenylation reaction at C2, to yield preechinulin. Preechinulin is the substrate of the cytochrome P450 monooxygenase criE that catalyzes the formation of the double bond between C10 and C11 to produce neoechulin A. The unique prenyltransferase criF functions as a competitive enzyme with criE for preechinulin metabolization and uses preechinulin for effective regiospecific prenylations. Preechinulin is prenylated by criF at C5 or C7. C7-prenylation leads to accumulation of tardioxopiperazine B without further modification by criF. In contrast, the C5-prenylated tardioxopiperazine A can be prenylated again by criF, predominantly at C7 to form echinulin or less frequently at C4 to give variecolorin L. CriF also accepts neoechilunin A to produce varlecolorin G (prenylation at C5) or isoechinulin A (prenylation at C7). CriF further converts isoechinulin A into dehydroechinulin. Moreover, a yet unidentified enzyme can also convert neoechilunin A into neoechilunin B by introducing a double bond between positions C14 and C17 and thus provides a further substrate to criF for C5 and C7 prenylation. The sequence is that of Nonribosomal peptide synthetase criC from Aspergillus cristatus (Chinese Fuzhuan brick tea-fermentation fungus).